Here is a 573-residue protein sequence, read N- to C-terminus: Protein DSE1 (573 aa).

4 WD repeats span residues 144–185 (DFPP…GCAK), 315–351 (RKNT…GKPV), 356–395 (AKKG…NMKY), and 397–448 (ELVH…NGKG). Residues 500–509 (SDSSMLSLSN) show a composition bias toward low complexity. The disordered stretch occupies residues 500–519 (SDSSMLSLSNESDHSMTETS). K553 is covalently cross-linked (Glycyl lysine isopeptide (Lys-Gly) (interchain with G-Cter in ubiquitin)).

The protein belongs to the WD repeat DSE1 family.

The protein localises to the bud neck. Functionally, involved in cell wall metabolism and required for the separation of the mother and daughter cells. The protein is Protein DSE1 (DSE1) of Saccharomyces cerevisiae (strain ATCC 204508 / S288c) (Baker's yeast).